Reading from the N-terminus, the 34-residue chain is DDIT3 upstream open reading frame protein (34 aa).

As to quaternary structure, interacts with DDIT3 (isoform 1).

The protein resides in the nucleus. The protein localises to the cytoplasm. Its function is as follows. Product of the upstream open reading frame (uORF) of DDIT3/CHOP that is specifically produced in absence of stress, thereby preventing translation of downstream stress effector DDIT3/CHOP. The chain is DDIT3 upstream open reading frame protein from Mus musculus (Mouse).